The sequence spans 272 residues: MGGLDVVRAAHLHPSYELVDWKRVGQNKLVALVRSALVRVKFQDTTSSDSNNQDTSQNALSFDTQESQKALNGSQSGSSDTSGSNSQDFASYILIFQAAPRATWVFERKIKLALPYVKQESQGSDDQGSNGKGSLYTTLQDLLVEQPVTPYTPNAGLARVNGVAQDTVHFGSGQESSWNSQRSQKGLKTTPLPMPSPALSSIRAARTGSWMKVDRCMNPWIRPRRGRGRMRALGKIRKKQRRKMMPRWWGWLEVVRLEVLLVYKAMARTVRG.

2 disordered regions span residues Q65–S84 and G171–S196. Residues N72 to S84 show a composition bias toward low complexity. Residues G173–L187 are compositionally biased toward polar residues.

This sequence belongs to the MgpC family.

This Mycoplasma pneumoniae (strain ATCC 29342 / M129 / Subtype 1) (Mycoplasmoides pneumoniae) protein is Putative MgpC-like protein MPN_366.